The sequence spans 295 residues: Protein shisa-2 homolog (295 aa).

Residues 1–33 (MWGARRSSVSSSWNAASLLQLLLAALLAAGARA) form the signal peptide. Residues 34-110 (SGEYCHGWLD…RADKDGPDGS (77 aa)) lie on the Extracellular side of the membrane. Residues 87 to 108 (GCDNDRQQGAGEPGRADKDGPD) form a disordered region. A helical transmembrane segment spans residues 111–131 (AVPIYVPFLIVGSVFVAFIIL). Residues 132–295 (GSLVAACCCR…EQKMYPAVTV (164 aa)) are Cytoplasmic-facing. A disordered region spans residues 168–205 (PSASTSRGSSSRQSSTAASSSSSANSGARAPPTRSQTN). Low complexity predominate over residues 169 to 197 (SASTSRGSSSRQSSTAASSSSSANSGARA).

It belongs to the shisa family.

Its subcellular location is the endoplasmic reticulum membrane. Functionally, plays an essential role in the maturation of presomitic mesoderm cells by individual attenuation of both FGF and WNT signaling. In Homo sapiens (Human), this protein is Protein shisa-2 homolog (SHISA2).